The following is a 431-amino-acid chain: MSKIINVIGREIMDSRGNPTVEAEVHLEGGFNGMAAAPSGASTGSREALELRDGDKTRYMGKGVLKAVANINGPIRDALMGKDATNQAELDQIMIDLDGTENKDKLGANAILAVSLSAAKAAASFKGLPLYAHIAELNGTAGQYSMPVPMMNILNGGEHADNNVDIQEFMVQPVGAKTFREALQVGAEIFHNLKKVLQEKGLSTSVGDEGGFAPNLASNADALAMIKVAVEKAGYKLGEDVTLALDCAASEFYKDGQYDLTGEGKVFSANGFSDFLKSLTEQYPIASIEDGLDESDWDGWAYQTQIMGDKIQLVGDDLFVTNTKILKRGIDNNIANSILIKFNQIGSLTETLAAIRMAKDAGYTVVISHRSGETEDSTIADLAVATSAGQIKTGSLCRSDRVAKYNQLLRIEEQLGEKAPYRGRSEIKGKA.

Glutamine 167 is a binding site for (2R)-2-phosphoglycerate. The active-site Proton donor is glutamate 209. Residues aspartate 246, glutamate 289, and aspartate 316 each contribute to the Mg(2+) site. 4 residues coordinate (2R)-2-phosphoglycerate: lysine 341, arginine 370, serine 371, and lysine 392. Lysine 341 functions as the Proton acceptor in the catalytic mechanism.

It belongs to the enolase family. As to quaternary structure, component of the RNA degradosome, a multiprotein complex involved in RNA processing and mRNA degradation. It depends on Mg(2+) as a cofactor.

Its subcellular location is the cytoplasm. The protein localises to the secreted. The protein resides in the cell surface. It catalyses the reaction (2R)-2-phosphoglycerate = phosphoenolpyruvate + H2O. It participates in carbohydrate degradation; glycolysis; pyruvate from D-glyceraldehyde 3-phosphate: step 4/5. Functionally, catalyzes the reversible conversion of 2-phosphoglycerate (2-PG) into phosphoenolpyruvate (PEP). It is essential for the degradation of carbohydrates via glycolysis. In Shewanella sediminis (strain HAW-EB3), this protein is Enolase.